The sequence spans 47 residues: MTTKNRQIQNFTLNFGPQHPAAHGVLRLVLEMNGEVVERAEPHIGLL.

The protein belongs to the complex I 49 kDa subunit family. In terms of assembly, complex I is composed of about 45 different subunits. This is a component of the iron-sulfur (IP) fragment of the enzyme.

It is found in the mitochondrion inner membrane. The catalysed reaction is a ubiquinone + NADH + 5 H(+)(in) = a ubiquinol + NAD(+) + 4 H(+)(out). Core subunit of the mitochondrial membrane respiratory chain NADH dehydrogenase (Complex I) that is believed to belong to the minimal assembly required for catalysis. Complex I functions in the transfer of electrons from NADH to the respiratory chain. The immediate electron acceptor for the enzyme is believed to be ubiquinone. Component of the iron-sulfur (IP) fragment of the enzyme. The protein is NADH dehydrogenase [ubiquinone] iron-sulfur protein 2 (NAD7) of Solanum tuberosum (Potato).